A 408-amino-acid polypeptide reads, in one-letter code: 2-acyl-4-prenylphloroglucinol 6-prenyltransferase, chloroplastic (408 aa).

The N-terminal 46 residues, 1 to 46 (MELSSACNLSLKPNYYYYPTSLFPSNNSYNNLKASSYYQTQRPIKC), are a transit peptide targeting the chloroplast. Transmembrane regions (helical) follow at residues 119–139 (PIPF…ELLK), 146–166 (WQLM…HIYI), 193–213 (SVKS…LLMI), 217–237 (CGLF…MYSV), 257–277 (IGIG…GLPF), 281–301 (PPFT…SILK), 326–346 (IVLV…GVAI), 355–375 (YIMI…TWLL), and 388–408 (YYHF…FIST).

It belongs to the UbiA prenyltransferase family. In terms of assembly, homo- and heteromer. Interacts with PT1L, forming a functional metabolon. It depends on Mg(2+) as a cofactor. As to expression, expressed in trichomes.

The protein resides in the plastid. It is found in the chloroplast membrane. The catalysed reaction is a 2-acyl-4-prenylphloroglucinol + dimethylallyl diphosphate = a 2-acyl-4,6-diprenylphloroglucinol + diphosphate. It carries out the reaction a 2-acyl-4,6-diprenylphloroglucinol + dimethylallyl diphosphate = a 2-acyl-4,6,6-triprenylphloroglucinol + diphosphate. It functions in the pathway secondary metabolite biosynthesis. Its function is as follows. Involved in the biosynthesis of prenylated phenolics natural products which contribute to the bitter taste of beer and display broad biological activities. Catalyzes the two last prenylation steps in the beta-bitter acid pathway. Uses dimethylallyl diphosphate (DMAPP) as the prenyl donor. This is 2-acyl-4-prenylphloroglucinol 6-prenyltransferase, chloroplastic from Humulus lupulus (European hop).